We begin with the raw amino-acid sequence, 1023 residues long: RTX-I toxin determinant A from serotypes 1/9 (1023 aa).

3 helical membrane-spanning segments follow: residues 226 to 256, 297 to 326, and 367 to 406; these read NNLPDLSLAGPGFDAVSGILSVVSASFILSN, STTAATGGLIGSVVALAISPLSFLNVADKF, and INSVLSARSAGVGAAATGSLVGAPVAALVSAITGIISGIL. Hemolysin-type calcium-binding repeat units lie at residues 730–747, 748–765, 766–783, 784–801, 812–829, and 830–847; these read FGSRFTDIFHGAKGDDEI, YGNDGHDILYGDDGNDVI, HGGDGNDHLVGGNGNDRL, IGGKGNNFLNGGDGDDEL, LGGAGNDILYGSDGTNLF, and DGGVGNDKIYGGLGKDIY.

It belongs to the RTX prokaryotic toxin (TC 1.C.11) family. Post-translationally, palmitoylated by ApxIC. The toxin only becomes active when modified.

The protein localises to the secreted. The protein resides in the host cell membrane. In terms of biological role, one of the virulence factors of A.pleuropneumoniae, which has a strong hemolytic activity and is cytotoxic for alveolar macrophages and neutrophils. This Actinobacillus pleuropneumoniae (Haemophilus pleuropneumoniae) protein is RTX-I toxin determinant A from serotypes 1/9 (apxIA).